The primary structure comprises 127 residues: Group 3 truncated hemoglobin ctb (127 aa).

Residues Y64 and H72 each coordinate heme.

It belongs to the truncated hemoglobin family. Group III subfamily. In terms of assembly, monomer. The cofactor is heme.

The protein localises to the cytoplasm. Its function is as follows. Has been suggested to be involved in cytochrome c peroxidase or P450-like oxygen chemistry or cyanide detoxification. The high oxygen affinity of this protein suggests that it probably does not function as an oxygen transporter. The sequence is that of Group 3 truncated hemoglobin ctb (ctb) from Campylobacter jejuni subsp. jejuni serotype O:2 (strain ATCC 700819 / NCTC 11168).